The sequence spans 88 residues: Small ribosomal subunit protein uS15 (88 aa).

It belongs to the universal ribosomal protein uS15 family. As to quaternary structure, part of the 30S ribosomal subunit. Forms a bridge to the 50S subunit in the 70S ribosome, contacting the 23S rRNA.

Its function is as follows. One of the primary rRNA binding proteins, it binds directly to 16S rRNA where it helps nucleate assembly of the platform of the 30S subunit by binding and bridging several RNA helices of the 16S rRNA. Functionally, forms an intersubunit bridge (bridge B4) with the 23S rRNA of the 50S subunit in the ribosome. In Polaromonas sp. (strain JS666 / ATCC BAA-500), this protein is Small ribosomal subunit protein uS15.